A 341-amino-acid polypeptide reads, in one-letter code: tRNA N6-adenosine threonylcarbamoyltransferase (341 aa).

Fe cation-binding residues include His-112 and His-116. Residues 134 to 138 (LASGG), Asp-167, Gly-180, and Asn-279 contribute to the substrate site. Fe cation is bound at residue Asp-307.

This sequence belongs to the KAE1 / TsaD family. The cofactor is Fe(2+).

Its subcellular location is the cytoplasm. The enzyme catalyses L-threonylcarbamoyladenylate + adenosine(37) in tRNA = N(6)-L-threonylcarbamoyladenosine(37) in tRNA + AMP + H(+). Its function is as follows. Required for the formation of a threonylcarbamoyl group on adenosine at position 37 (t(6)A37) in tRNAs that read codons beginning with adenine. Is involved in the transfer of the threonylcarbamoyl moiety of threonylcarbamoyl-AMP (TC-AMP) to the N6 group of A37, together with TsaE and TsaB. TsaD likely plays a direct catalytic role in this reaction. The sequence is that of tRNA N6-adenosine threonylcarbamoyltransferase from Rickettsia bellii (strain OSU 85-389).